A 610-amino-acid polypeptide reads, in one-letter code: MTIKFLSESTINRIAAGEVIERPASVVKELVENAVDASSTKIDIILERAGKNLIIISDDGIGMTDKELEIAVERHTTSKFDESDFLNINTFGFRGEALPSIAAISKMLITSKKRDADKAFQIKLIGGNEKQVTISVHNEGTKIEIRDLFFATPARLKFLRADKTELAATVGVVKKIALAHPKISLSLTHDGKNLLKLKGQNKDAETNLKQRIIDVIGDDFIKNAAYIDFKTPDFSICGYTSSPTYNRASSEDQFLFINNRPVKDKLLQVALRVAYQDYLARDRYPICAIFLQINPQLVDVNVHPAKAEVRFHDPNYVRNLLIEAIKNALTNKSHVTSTTIASDALELFKNPLVNKQSPVSKVINVNSKSADYRPTTHSTLNTVPQNHVCQKLIDTLSHAKIEQEVENHIEHEQQTRKQYKLGAAKAQLHTTYIISQTEDSIVITDQHAAHERLGYEKIKDYLKTEELIKQRLLIPEIVELPNEKKADCLYDHREKLYKLGLTLEKFGEKSIIVTEIPNILGDVNVQKLIQDLADHLSDFGKNIALTELIEHVTETYACHYSIRAGRKLSADEMNALLRQMENTPLSGQCNHGRPTYIELKLKDIERLFGR.

This sequence belongs to the DNA mismatch repair MutL/HexB family.

This protein is involved in the repair of mismatches in DNA. It is required for dam-dependent methyl-directed DNA mismatch repair. May act as a 'molecular matchmaker', a protein that promotes the formation of a stable complex between two or more DNA-binding proteins in an ATP-dependent manner without itself being part of a final effector complex. The chain is DNA mismatch repair protein MutL from Rickettsia peacockii (strain Rustic).